Reading from the N-terminus, the 143-residue chain is Small ribosomal subunit protein uS12 (143 aa).

Basic residues predominate over residues Met1–Asp15. Positions Met1 to Tyr27 are disordered. Basic and acidic residues predominate over residues His16 to Tyr27.

Belongs to the universal ribosomal protein uS12 family. In terms of assembly, component of the 40S small ribosomal subunit.

The protein localises to the cytoplasm. It is found in the cytosol. The protein resides in the rough endoplasmic reticulum. The chain is Small ribosomal subunit protein uS12 (rps23) from Ictalurus punctatus (Channel catfish).